Reading from the N-terminus, the 200-residue chain is CASP-like protein 1D2 (200 aa).

A disordered region spans residues 1 to 26 (MASTENPDPETGKSEPIPASATTPPP). Over 1-36 (MASTENPDPETGKSEPIPASATTPPPSAASFLDCRK) the chain is Cytoplasmic. A helical transmembrane segment spans residues 37–57 (IDVIIRVLLFSATLTALIVMV). Over 58 to 85 (TSDQTEKTQLPGVSSPAPVSAEFNDSPA) the chain is Extracellular. The chain crosses the membrane as a helical span at residues 86–106 (FIFFVVALVVTSFYALMSTLV). The Cytoplasmic segment spans residues 107–129 (SISLLLKPEFTARVSVYLASLDM). Residues 130–150 (VMLGILASATGTAGGVAYIAL) traverse the membrane as a helical segment. Residues 151-171 (KGNKEVGWNKICNVYDKFCRY) are Extracellular-facing. A helical membrane pass occupies residues 172–192 (IATSLALSLFATLLLLVLSIC). The Cytoplasmic segment spans residues 193–200 (SALSKRTP).

This sequence belongs to the Casparian strip membrane proteins (CASP) family. Homodimer and heterodimers.

It localises to the cell membrane. This is CASP-like protein 1D2 from Arabidopsis lyrata subsp. lyrata (Lyre-leaved rock-cress).